We begin with the raw amino-acid sequence, 154 residues long: Protein FAM162A (154 aa).

Residues 76-102 (RFKKEDEIPETVSLEMLDAAKNKMRVK) form a required for proapoptotic activity region. A helical transmembrane segment spans residues 103–120 (ISYLMIALTVVGCIFMVI).

This sequence belongs to the UPF0389 family. Interacts with HSP90AB1; HSP90AB1 is essential for FAM162A mitochondrial localization and pro-apoptotic activity. Interacts with VDAC2; the interaction is probably involved in inducing mitochondrial permeability transition.

The protein localises to the mitochondrion membrane. Proposed to be involved in regulation of apoptosis; the exact mechanism may differ between cell types/tissues. May be involved in hypoxia-induced cell death of transformed cells implicating cytochrome C release and caspase activation (such as CASP9) and inducing mitochondrial permeability transition. May be involved in hypoxia-induced cell death of neuronal cells probably by promoting release of AIFM1 from mitochondria to cytoplasm and its translocation to the nucleus; however, the involvement of caspases has been reported conflictingly. The protein is Protein FAM162A (FAM162A) of Homo sapiens (Human).